The primary structure comprises 486 residues: Ribosomal RNA small subunit methyltransferase F (486 aa).

S-adenosyl-L-methionine is bound by residues 122–128 (ASAPGSK), E146, D173, and D191. Catalysis depends on C244, which acts as the Nucleophile.

This sequence belongs to the class I-like SAM-binding methyltransferase superfamily. RsmB/NOP family.

It is found in the cytoplasm. It carries out the reaction cytidine(1407) in 16S rRNA + S-adenosyl-L-methionine = 5-methylcytidine(1407) in 16S rRNA + S-adenosyl-L-homocysteine + H(+). Its function is as follows. Specifically methylates the cytosine at position 1407 (m5C1407) of 16S rRNA. This is Ribosomal RNA small subunit methyltransferase F from Shewanella loihica (strain ATCC BAA-1088 / PV-4).